The following is a 254-amino-acid chain: Caffeoyl-CoA O-methyltransferase (254 aa).

A disordered region spans residues 1 to 25 (MATTNVEENKQTQEQQPKEIKHQEV). Over residues 7-25 (EENKQTQEQQPKEIKHQEV) the composition is skewed to basic and acidic residues. Position 28 (Lys28) interacts with substrate. S-adenosyl-L-methionine contacts are provided by residues Thr70, Glu92, 94–95 (GV), Ser100, Asp118, and Ala147. Asp170 serves as a coordination point for substrate. Residue Asp170 coordinates a divalent metal cation. Residue Asp172 coordinates S-adenosyl-L-methionine. A divalent metal cation contacts are provided by Asp196 and Asn197. A substrate-binding site is contributed by Asn201.

Belongs to the class I-like SAM-binding methyltransferase superfamily. Cation-dependent O-methyltransferase family. CCoAMT subfamily. The cofactor is a divalent metal cation.

It catalyses the reaction (E)-caffeoyl-CoA + S-adenosyl-L-methionine = (E)-feruloyl-CoA + S-adenosyl-L-homocysteine + H(+). It participates in aromatic compound metabolism; phenylpropanoid biosynthesis. Its function is as follows. Methylates caffeoyl-CoA to feruloyl-CoA and 5-hydroxyferuloyl-CoA to sinapoyl-CoA. Plays a role in the synthesis of feruloylated polysaccharides. Involved in the reinforcement of the plant cell wall. Also involved in the responding to wounding or pathogen challenge by the increased formation of cell wall-bound ferulic acid polymers. This chain is Caffeoyl-CoA O-methyltransferase, found in Mesembryanthemum crystallinum (Common ice plant).